A 183-amino-acid polypeptide reads, in one-letter code: Ribosome maturation factor RimM (183 aa).

The PRC barrel domain occupies Asp-102–Phe-183.

This sequence belongs to the RimM family. As to quaternary structure, binds ribosomal protein uS19.

The protein localises to the cytoplasm. An accessory protein needed during the final step in the assembly of 30S ribosomal subunit, possibly for assembly of the head region. Essential for efficient processing of 16S rRNA. May be needed both before and after RbfA during the maturation of 16S rRNA. It has affinity for free ribosomal 30S subunits but not for 70S ribosomes. This Saccharophagus degradans (strain 2-40 / ATCC 43961 / DSM 17024) protein is Ribosome maturation factor RimM.